The primary structure comprises 503 residues: Mitochondrial antiviral-signaling protein (503 aa).

Residues 1 to 478 are Cytoplasmic-facing; sequence MTFAEDKTYK…HCASSMPWAK (478 aa). Residues K7 and K10 each participate in a glycyl lysine isopeptide (Lys-Gly) (interchain with G-Cter in ubiquitin) cross-link. A CARD domain is found at 10–77; the sequence is KYIRDNHSKF…WVEVFIRALQ (68 aa). The required for interaction with NLRX1 stretch occupies residues 10 to 77; sequence KYIRDNHSKF…WVEVFIRALQ (68 aa). C79 carries the S-palmitoyl cysteine lipid modification. A disordered region spans residues 119 to 202; sequence GPSAFAPGHN…HQEQEPELGG (84 aa). The tract at residues 143 to 147 is interaction with TRAF2; that stretch reads PVQDT. The segment covering 145 to 166 has biased composition (polar residues); it reads QDTQPPESPVENSEQLLQTNSG. A phosphoserine mark is found at S152, S157, S172, S186, and S220. The interaction with TRAF6 1 stretch occupies residues 153-158; sequence PVENSE. The span at 178-189 shows a compositional bias: polar residues; it reads PSPNQQALSPQP. The residue at position 234 (R234) is an Asymmetric dimethylarginine. Phosphoserine is present on residues S251 and S256. A Glycyl lysine isopeptide (Lys-Gly) (interchain with G-Cter in ubiquitin) cross-link involves residue K302. Residues 337–503 are interaction with DHX33; the sequence is PSRVPASVAK…MLYRSRRLAQ (167 aa). Positions 346 to 398 are disordered; that stretch reads KAPANTIPPERNSKQAKETPEGPATKVTTGGNQTGPNSSIRSLHSGPEMSKPG. A compositionally biased stretch (basic and acidic residues) spans 356-365; it reads RNSKQAKETP. Residues 371–387 show a composition bias toward polar residues; that stretch reads KVTTGGNQTGPNSSIRS. A Phosphoserine modification is found at S384. A pLxIS motif motif is present at residues 415–418; that stretch reads LAIS. A Phosphoserine; by TBK1 modification is found at S418. An interaction with TRAF6 2 region spans residues 431–436; sequence PEENEY. A disordered region spans residues 446-466; the sequence is SPSADLLGSPEPLATQQPQEE. The helical transmembrane segment at 479-496 threads the bilayer; it reads WLGATSALLAVFLAVMLY. Residues 497-503 are Mitochondrial intermembrane-facing; the sequence is RSRRLAQ.

In terms of assembly, self-associates and polymerizes (via CARD domains) to form 400 nM long three-stranded helical filaments on mitochondria, filament nucleation requires interaction with RIGI whose CARD domains act as a template for filament assembly. Interacts with RIGI, IFIH1/MDA5, TRAF2, TRAF6 and C1QBP. May interact with FADD, RIPK1, IKBKE, CHUK and IKBKB. Interacts (when phosphorylated) with IRF3; following activation and phosphorylation on the pLxIS motif by TBK1, recruits IRF3. Interacts with NLRX1. Interaction with NLRX1 requires the CARD domain. Interacts with PSMA7. Interacts with TRAFD1. Interacts (via C-terminus) with PCBP2 in a complex containing MAVS/IPS1, PCBP2 and ITCH. Interacts with CYLD. Interacts with SRC. Interacts with DHX58/LGP2 and IKBKE. Interacts with STING1. Interacts with IFIT3 (via N-terminus). Interacts with TBK1 only in the presence of IFIT3. Interacts with TTLL12; the interaction prevents MAVS binding to TBK1 and IKBKE. Interacts with MUL1. Interacts with ANKRD17. Interacts with NDFIP1. Interacts with SMURF1; the interaction is mediated by NDFIP1 and leads to MAVS ubiquitination and degradation. Interacts (via C-terminus) with GPATCH3; the interaction is markedly increased upon viral infection. Directly interacts (via CARD domain) with ATG5 and ATG12, either as ATG5 and ATG12 monomers or as ATG12-ATG5 conjugates. Interacts with DHX33 (via the helicase C-terminal domain). Interacts with DDX3X (via C-terminus); this interaction may occur rapidly, but transiently after viral infection. The interaction with DDX3X potentiates MAVS-mediated IFNB induction. Conversely inhibition of this interaction prevents MAVS-mediated IFNB induction. Transiently interacts with TRAF3 early during viral infection. Interacts with CLPB. Interacts with TRAF3IP3. Interacts with TOMM70; the interaction is enhanced by virus infection. Interacts with ZNFX1. Interacts with DHX15. Interacts with N4BP3; this interaction promotes the polyubiquitination of MAVS. Interacts with TAX1BP1; this interaction induces MAVS polyubiquitination. Interacts with NLRP3; promoting NLRP3 recruitment to mitochondria and activation of the NLRP3 inflammasome. Interacts with ECSIT; this interaction bridges RIGI to the MAVS complex at the mitochondrion. Interacts with UBL7; this interaction promotes MAVS 'Lys-27'-linked ubiquitination leading to type I interferon production. Interacts (via transmembrane domain) with SMIM30/MAVI1 (via transmembrane domain); the interaction disrupts MAVS interaction with RIGI and inhibits MAVS aggregation, resulting in the repression of type I interferon signaling and innate immune responses. Post-translationally, following activation, phosphorylated by TBK1 at Ser-418 in the pLxIS motif. The phosphorylated pLxIS motif constitutes an IRF3-binding motif, leading to recruitment of the transcription factor IRF3 to induce type-I interferons and other cytokines. Ubiquitinated. Undergoes 'Lys-48'-linked polyubiquitination catalyzed by ITCH; ITCH-dependent polyubiquitination is mediated by the interaction with PCBP2 and leads to MAVS/IPS1 proteasomal degradation. Ubiquitinated by RNF125, leading to its degradation by the proteasome. Undergoes 'Lys-48'-linked ubiquitination catalyzed by SMURF1. Undergoes 'Lys-48'-linked ubiquitination catalyzed by MARCHF5 at Lys-7, leading to proteasomal degradation. Ubiquitinated via 'Lys-63'-linked ubiquitination at Lys-10 by TRIM31, promoting MAVS polymerization and formation of three-stranded helical filaments on mitochondria. Undergoes 'Lys-63'-linked ubiquitination leading to enhanced interaction between MAVS and TRAF2. Undergoes 'Lys-27'-linked ubiquitination by UBE2N and TRIM21 leading to enhanced interaction between MAVS and TBK1. Deubiquitinated by USP10 leading to attenuation of RIGI-mediated MAVS aggregation and production of type I interferon. Undergoes 'Lys-48'-linked polyubiquitination catalyzed by RNF115 leading to its degradation. In terms of processing, proteolytically cleaved by apoptotic caspases during apoptosis, leading to its inactivation. Cleavage by CASP3 during virus-induced apoptosis inactivates it, preventing cytokine overproduction. Post-translationally, palmitoylated by ZHDDC4. Palmitoylation promotes MAVS stabilization and activation by inhibiting 'Lys-48'- but facilitating 'Lys-63'-linked ubiquitination.

It is found in the mitochondrion outer membrane. The protein resides in the mitochondrion. Its subcellular location is the peroxisome. In terms of biological role, adapter required for innate immune defense against viruses. Acts downstream of DHX33, RIGI and IFIH1/MDA5, which detect intracellular dsRNA produced during viral replication, to coordinate pathways leading to the activation of NF-kappa-B, IRF3 and IRF7, and to the subsequent induction of antiviral cytokines such as IFN-beta and RANTES (CCL5). Peroxisomal and mitochondrial MAVS act sequentially to create an antiviral cellular state. Upon viral infection, peroxisomal MAVS induces the rapid interferon-independent expression of defense factors that provide short-term protection, whereas mitochondrial MAVS activates an interferon-dependent signaling pathway with delayed kinetics, which amplifies and stabilizes the antiviral response. May activate the same pathways following detection of extracellular dsRNA by TLR3. May protect cells from apoptosis. Involved in NLRP3 inflammasome activation by mediating NLRP3 recruitment to mitochondria. The sequence is that of Mitochondrial antiviral-signaling protein from Mus musculus (Mouse).